The sequence spans 325 residues: L-lactate dehydrogenase (325 aa).

NAD(+) is bound by residues Val-19, Asp-40, Lys-45, Tyr-70, and 84–85 (GA). Substrate-binding residues include Gln-87 and Arg-93. Residues Thr-106, 123 to 125 (AAN), and Ser-148 each bind NAD(+). 125-128 (NPVD) contacts substrate. 153-156 (DSAR) is a substrate binding site. Beta-D-fructose 1,6-bisphosphate is bound by residues Arg-158 and His-173. His-180 serves as the catalytic Proton acceptor. Tyr-225 is modified (phosphotyrosine). Residue Thr-234 coordinates substrate.

It belongs to the LDH/MDH superfamily. LDH family. Homotetramer.

Its subcellular location is the cytoplasm. It carries out the reaction (S)-lactate + NAD(+) = pyruvate + NADH + H(+). It functions in the pathway fermentation; pyruvate fermentation to lactate; (S)-lactate from pyruvate: step 1/1. With respect to regulation, allosterically activated by fructose 1,6-bisphosphate (FBP). Functionally, catalyzes the conversion of lactate to pyruvate. In Latilactobacillus sakei subsp. sakei (strain 23K) (Lactobacillus sakei subsp. sakei), this protein is L-lactate dehydrogenase.